We begin with the raw amino-acid sequence, 2058 residues long: Unconventional myosin-X (2058 aa).

The residue at position 1 (M1) is an N-acetylmethionine. The Myosin motor domain maps to 63–739 (EGVDDMASLT…LEQKLEKRRE (677 aa)). Residues N104, Y113, 160 to 165 (GAGKTE), and N215 contribute to the ATP site. The segment at 619 to 641 (LHSLMATLSSSNPFFVRCIKPNM) is actin-binding. IQ domains are found at residues 742–763 (VSHAAMVIRAHVLGFLARKQYR), 764–787 (KVLYCVVIIQKNYRAFLLRRRFLH), and 788–817 (LKKAAIVFQKQLRGQIARRVYRQLLAEKRE). The interval 814–883 (EKREQEEKKK…LTRELEKQKE (70 aa)) is SAH. 2 disordered regions span residues 819–840 (EEKKKQEEEEKKKREEEERERE) and 847–866 (ELRAQQEEETRKQQELEALQ). A compositionally biased stretch (basic and acidic residues) spans 847-861 (ELRAQQEEETRKQQE). Residues 884-934 (NKQVEEILRLEKEIEDLQRMKEQQELSLTEASLQKLQERRDQELRRLEEEA) adopt a coiled-coil conformation. Residues S962, S965, and S968 each carry the phosphoserine modification. A disordered region spans residues 964–1090 (GSEFSSELAE…DLPSPDGDYD (127 aa)). Over residues 989–1003 (PEEEVDEGFEADDDA) the composition is skewed to acidic residues. Positions 1040–1049 (VVPTSPSADS) are enriched in polar residues. Residues 1060–1071 (SGSLHNSSSGES) are compositionally biased toward low complexity. The residue at position 1158 (T1158) is a Phosphothreonine. PH domains are found at residues 1212-1310 (EALK…QVHA) and 1392-1497 (EFIV…NVTD). Positions 1547–1695 (LPYGDINLNL…PSRDEIEALI (149 aa)) constitute a MyTH4 domain. The FERM domain occupies 1700 to 2044 (MTSTVYCHGG…AYISMIVKKR (345 aa)).

This sequence belongs to the TRAFAC class myosin-kinesin ATPase superfamily. Myosin family. In terms of assembly, monomer, when in an inactive conformation in the cytosol. Homodimer in its active, membrane-bound conformation; antiparallel coiled coil-mediated dimer formation. Interacts strongly with CALM3 and weakly with CALM, the CALM3 interaction is essential for function in filopodial extension and motility. Interacts with ECPAS. Interacts with NEO1. Interacts with ITGB1 and ITGB3. Interacts with VASP. Interacts with DCC and ITGB5; the presence of DCC inhibits ITGB5 binding. Interacts with tubulin; ITGB5 or DCC binding inhibits tubulin binding. The initiator methionine for isoform Headless is removed. As to expression, ubiquitous.

It is found in the cytoplasm. The protein resides in the cytosol. Its subcellular location is the cell projection. The protein localises to the lamellipodium. It localises to the ruffle. It is found in the cytoskeleton. The protein resides in the filopodium tip. Its subcellular location is the cell cortex. The protein localises to the filopodium membrane. In terms of biological role, myosins are actin-based motor molecules with ATPase activity. Unconventional myosins serve in intracellular movements. MYO10 binds to actin filaments and actin bundles and functions as a plus end-directed motor. Moves with higher velocity and takes larger steps on actin bundles than on single actin filaments. The tail domain binds to membranous compartments containing phosphatidylinositol 3,4,5-trisphosphate or integrins, and mediates cargo transport along actin filaments. Regulates cell shape, cell spreading and cell adhesion. Stimulates the formation and elongation of filopodia. In hippocampal neurons it induces the formation of dendritic filopodia by trafficking the actin-remodeling protein VASP to the tips of filopodia, where it promotes actin elongation. Plays a role in formation of the podosome belt in osteoclasts. Functionally, functions as a dominant-negative regulator of isoform 1, suppressing its filopodia-inducing and axon outgrowth-promoting activities. In hippocampal neurons, it increases VASP retention in spine heads to induce spine formation and spine head expansion. This is Unconventional myosin-X (MYO10) from Homo sapiens (Human).